The primary structure comprises 169 residues: Shikimate kinase (169 aa).

13-18 (GAGKST) contacts ATP. Ser17 serves as a coordination point for Mg(2+). Residues Asp35, Arg59, and Gly80 each coordinate substrate. ATP is bound at residue Arg117. Arg136 contacts substrate. Arg153 is an ATP binding site.

This sequence belongs to the shikimate kinase family. As to quaternary structure, monomer. The cofactor is Mg(2+).

Its subcellular location is the cytoplasm. It carries out the reaction shikimate + ATP = 3-phosphoshikimate + ADP + H(+). Its pathway is metabolic intermediate biosynthesis; chorismate biosynthesis; chorismate from D-erythrose 4-phosphate and phosphoenolpyruvate: step 5/7. Catalyzes the specific phosphorylation of the 3-hydroxyl group of shikimic acid using ATP as a cosubstrate. This chain is Shikimate kinase, found in Corynebacterium glutamicum (strain ATCC 13032 / DSM 20300 / JCM 1318 / BCRC 11384 / CCUG 27702 / LMG 3730 / NBRC 12168 / NCIMB 10025 / NRRL B-2784 / 534).